The chain runs to 367 residues: NADH-ubiquinone oxidoreductase chain 1 (367 aa).

The next 10 membrane-spanning stretches (helical) occupy residues 5–25, 43–63, 74–94, 108–128, 152–172, 179–199, 225–245, 265–285, 301–321, and 336–356; these read IIISLIEVVLVLVPALLGIAY, PNFVGYYGLLQAFADALKLLL, IILFFLGPVITLIFSLLGYAV, LGIYYILAVSSLATYGILLAG, LVLSSAILLVIMLTGSLNLSV, AIWNIFPLLPVFIIFFIGSVA, AVVFVFFFLAEYGSIVLMCIL, FFYSILFNIGFIDLNFFNIFY, LIYGLTIGLKSSILIFLFIWV, and FCWTVLLPLLFALIVLLPCIL.

It belongs to the complex I subunit 1 family.

The protein resides in the mitochondrion inner membrane. It catalyses the reaction a ubiquinone + NADH + 5 H(+)(in) = a ubiquinol + NAD(+) + 4 H(+)(out). Functionally, core subunit of the mitochondrial membrane respiratory chain NADH dehydrogenase (Complex I) that is believed to belong to the minimal assembly required for catalysis. Complex I functions in the transfer of electrons from NADH to the respiratory chain. The immediate electron acceptor for the enzyme is believed to be ubiquinone. This chain is NADH-ubiquinone oxidoreductase chain 1 (ND1), found in Podospora anserina (strain S / ATCC MYA-4624 / DSM 980 / FGSC 10383) (Pleurage anserina).